The following is a 500-amino-acid chain: Probable cytosol aminopeptidase (500 aa).

Residues lysine 265 and aspartate 270 each coordinate Mn(2+). The active site involves lysine 277. 3 residues coordinate Mn(2+): aspartate 288, aspartate 347, and glutamate 349. Residue arginine 351 is part of the active site.

The protein belongs to the peptidase M17 family. It depends on Mn(2+) as a cofactor.

It is found in the cytoplasm. It catalyses the reaction Release of an N-terminal amino acid, Xaa-|-Yaa-, in which Xaa is preferably Leu, but may be other amino acids including Pro although not Arg or Lys, and Yaa may be Pro. Amino acid amides and methyl esters are also readily hydrolyzed, but rates on arylamides are exceedingly low.. It carries out the reaction Release of an N-terminal amino acid, preferentially leucine, but not glutamic or aspartic acids.. Functionally, presumably involved in the processing and regular turnover of intracellular proteins. Catalyzes the removal of unsubstituted N-terminal amino acids from various peptides. The protein is Probable cytosol aminopeptidase of Bdellovibrio bacteriovorus (strain ATCC 15356 / DSM 50701 / NCIMB 9529 / HD100).